A 357-amino-acid polypeptide reads, in one-letter code: tRNA N6-adenosine threonylcarbamoyltransferase (357 aa).

Fe cation is bound by residues His115 and His119. Substrate is bound by residues 137-141 (LASGG), Asp170, Gly183, and Asn281. Asp309 provides a ligand contact to Fe cation.

Belongs to the KAE1 / TsaD family. The cofactor is Fe(2+).

The protein localises to the cytoplasm. The catalysed reaction is L-threonylcarbamoyladenylate + adenosine(37) in tRNA = N(6)-L-threonylcarbamoyladenosine(37) in tRNA + AMP + H(+). Its function is as follows. Required for the formation of a threonylcarbamoyl group on adenosine at position 37 (t(6)A37) in tRNAs that read codons beginning with adenine. Is involved in the transfer of the threonylcarbamoyl moiety of threonylcarbamoyl-AMP (TC-AMP) to the N6 group of A37, together with TsaE and TsaB. TsaD likely plays a direct catalytic role in this reaction. This is tRNA N6-adenosine threonylcarbamoyltransferase from Bradyrhizobium diazoefficiens (strain JCM 10833 / BCRC 13528 / IAM 13628 / NBRC 14792 / USDA 110).